We begin with the raw amino-acid sequence, 539 residues long: Phosphoenolpyruvate carboxykinase (ATP) (539 aa).

The substrate site is built by Arg64, Tyr206, and Lys212. Residues Lys212, His231, and 247–255 (GLSGTGKTT) contribute to the ATP site. Lys212 and His231 together coordinate Mn(2+). Asp268 is a Mn(2+) binding site. ATP is bound by residues Glu296, Arg332, 448–449 (RI), and Thr454. Arg332 serves as a coordination point for substrate.

The protein belongs to the phosphoenolpyruvate carboxykinase (ATP) family. In terms of assembly, monomer. Mn(2+) serves as cofactor.

It localises to the cytoplasm. The enzyme catalyses oxaloacetate + ATP = phosphoenolpyruvate + ADP + CO2. Its pathway is carbohydrate biosynthesis; gluconeogenesis. Its function is as follows. Involved in the gluconeogenesis. Catalyzes the conversion of oxaloacetate (OAA) to phosphoenolpyruvate (PEP) through direct phosphoryl transfer between the nucleoside triphosphate and OAA. In Hamiltonella defensa subsp. Acyrthosiphon pisum (strain 5AT), this protein is Phosphoenolpyruvate carboxykinase (ATP).